We begin with the raw amino-acid sequence, 111 residues long: Beta-2-microglobulin (111 aa).

An N-terminal signal peptide occupies residues 1–17 (MRALILLSLGLLRVAVP). In terms of domain architecture, Ig-like C1-type spans 20–111 (PQVVVYTYKP…KTSIYKLESF (92 aa)).

This sequence belongs to the beta-2-microglobulin family. Heterodimer of an alpha chain and a beta chain. Beta-2-microglobulin is the beta-chain of major histocompatibility complex class I molecules.

The protein resides in the secreted. In terms of biological role, component of the class I major histocompatibility complex (MHC). Involved in the presentation of peptide antigens to the immune system. The chain is Beta-2-microglobulin (b2m) from Rostroraja eglanteria (Clearnose skate).